Here is a 431-residue protein sequence, read N- to C-terminus: Large envelope protein (431 aa).

The N-myristoyl glycine; by host moiety is linked to residue G2. Positions 2-148 (GNNIKVTFNP…PPLRDTHPHL (147 aa)) are pre-S1. The pre-S stretch occupies residues 2–207 (GNNIKVTFNP…PSTTGDPALS (206 aa)). Over 2–214 (GNNIKVTFNP…ALSPEMSPSS (213 aa)) the chain is Virion surface; in external conformation. At 2-286 (GNNIKVTFNP…NGFRWMYLRR (285 aa)) the chain is on the intravirion; in internal conformation side. N3 is a glycosylation site (N-linked (GlcNAc...) asparagine). The interval 115–147 (IPRGLVPPQTPTNRDQGRKPTPPTPPLRDTHPH) is disordered. Residues 149-207 (TMKNQTFHLQGFVDGLRDLTTTERQHNAYGDPFTTLSPAVPTVSTILSPPSTTGDPALS) form a pre-S2 region. The helical transmembrane segment at 215–235 (LLGLLAGLQVVYFLWTKILTI) threads the bilayer. Residues 236–286 (AQNLDWWWTSLSFPGGIPECTGQNSQFQTCKHLPTSCPPTCNGFRWMYLRR) lie on the Intravirion; in external conformation side of the membrane. The chain crosses the membrane as a helical span at residues 287-307 (FIIYLLVLLLCLIFLLVLLDW). At 308-379 (KGFIPVCPLQ…WALARFSWLN (72 aa)) the chain is on the virion surface side. N351 carries N-linked (GlcNAc...) asparagine; by host glycosylation. Residues 380–400 (LLVPLLQWLGGISLIAWFLLI) form a helical membrane-spanning segment. Residues 401 to 406 (WMIWFW) lie on the Intravirion side of the membrane. The chain crosses the membrane as a helical span at residues 407–429 (GPALLSILPPFIPIFVLFFLIWV). The Virion surface portion of the chain corresponds to 430–431 (YI).

The protein belongs to the orthohepadnavirus major surface antigen family. In its internal form (Li-HBsAg), interacts with the capsid protein and with the isoform S. Interacts with host chaperone CANX. As to quaternary structure, associates with host chaperone CANX through its pre-S2 N glycan; this association may be essential for isoform M proper secretion. In terms of assembly, interacts with isoform L. Interacts with the antigens of satellite virus HDV (HDVAgs); this interaction is required for encapsidation of HDV genomic RNA. In terms of processing, isoform M is N-terminally acetylated by host at a ratio of 90%, and N-glycosylated by host at the pre-S2 region. Post-translationally, myristoylated.

It is found in the virion membrane. In terms of biological role, the large envelope protein exists in two topological conformations, one which is termed 'external' or Le-HBsAg and the other 'internal' or Li-HBsAg. In its external conformation the protein attaches the virus to cell receptors and thereby initiating infection. This interaction determines the species specificity and liver tropism. This attachment induces virion internalization predominantly through caveolin-mediated endocytosis. The large envelope protein also assures fusion between virion membrane and endosomal membrane. In its internal conformation the protein plays a role in virion morphogenesis and mediates the contact with the nucleocapsid like a matrix protein. Its function is as follows. The middle envelope protein plays an important role in the budding of the virion. It is involved in the induction of budding in a nucleocapsid independent way. In this process the majority of envelope proteins bud to form subviral lipoprotein particles of 22 nm of diameter that do not contain a nucleocapsid. This chain is Large envelope protein, found in Marmota monax (Woodchuck).